We begin with the raw amino-acid sequence, 97 residues long: Putative defensin-like protein 240 (97 aa).

Positions 1-23 (MRYTTSFIVFCFYIFLFTNLVQG) are cleaved as a signal peptide. Disulfide bonds link Cys-29–Cys-88, Cys-39–Cys-69, Cys-47–Cys-85, and Cys-67–Cys-87.

The protein belongs to the DEFL family.

Its subcellular location is the secreted. This chain is Putative defensin-like protein 240 (SCRL18), found in Arabidopsis thaliana (Mouse-ear cress).